Here is a 425-residue protein sequence, read N- to C-terminus: Dihydroorotase (425 aa).

Zn(2+) is bound by residues His-56 and His-58. Residues 58-60 (HWR) and Asn-90 contribute to the substrate site. Zn(2+)-binding residues include Asp-147, His-174, and His-227. Substrate is bound at residue Asn-273. Asp-300 is a Zn(2+) binding site. Asp-300 is a catalytic residue. Residues His-304 and 318-319 (FG) each bind substrate.

The protein belongs to the metallo-dependent hydrolases superfamily. DHOase family. Class I DHOase subfamily. Requires Zn(2+) as cofactor.

The catalysed reaction is (S)-dihydroorotate + H2O = N-carbamoyl-L-aspartate + H(+). Its pathway is pyrimidine metabolism; UMP biosynthesis via de novo pathway; (S)-dihydroorotate from bicarbonate: step 3/3. Its function is as follows. Catalyzes the reversible cyclization of carbamoyl aspartate to dihydroorotate. The sequence is that of Dihydroorotase from Fusobacterium nucleatum subsp. nucleatum (strain ATCC 25586 / DSM 15643 / BCRC 10681 / CIP 101130 / JCM 8532 / KCTC 2640 / LMG 13131 / VPI 4355).